Consider the following 254-residue polypeptide: NAD-dependent protein deacetylase 1 (254 aa).

Positions 3–252 constitute a Deacetylase sirtuin-type domain; the sequence is VDFTTDELDE…PKLLDRLRGM (250 aa). The NAD(+) site is built by alanine 29, threonine 33, phenylalanine 40, arginine 41, glutamine 105, valine 107, aspartate 108, and histidine 123. Position 40 (phenylalanine 40) interacts with nicotinamide. Positions 107 and 108 each coordinate nicotinamide. Histidine 123 serves as the catalytic Proton acceptor. Zn(2+) contacts are provided by cysteine 131, cysteine 134, cysteine 154, and cysteine 157. Threonine 195, serine 196, and asparagine 220 together coordinate NAD(+).

Belongs to the sirtuin family. Class U subfamily. The cofactor is Zn(2+).

The protein localises to the cytoplasm. The enzyme catalyses N(6)-acetyl-L-lysyl-[protein] + NAD(+) + H2O = 2''-O-acetyl-ADP-D-ribose + nicotinamide + L-lysyl-[protein]. Its function is as follows. NAD-dependent protein deacetylase which modulates the activities of several enzymes which are inactive in their acetylated form. Deacetylates the N-terminal lysine residue of Alba, the major archaeal chromatin protein and that, in turn, increases Alba's DNA binding affinity, thereby repressing transcription. In Pyrobaculum aerophilum (strain ATCC 51768 / DSM 7523 / JCM 9630 / CIP 104966 / NBRC 100827 / IM2), this protein is NAD-dependent protein deacetylase 1.